Reading from the N-terminus, the 189-residue chain is GMP synthase [glutamine-hydrolyzing] subunit A (189 aa).

In terms of domain architecture, Glutamine amidotransferase type-1 spans 1–189; that stretch reads MIVILNNGGQ…CKKCGFEFEE (189 aa). Cys-76 (nucleophile) is an active-site residue. Catalysis depends on residues His-163 and Glu-165.

Heterodimer composed of a glutamine amidotransferase subunit (A) and a GMP-binding subunit (B).

The enzyme catalyses XMP + L-glutamine + ATP + H2O = GMP + L-glutamate + AMP + diphosphate + 2 H(+). The protein operates within purine metabolism; GMP biosynthesis; GMP from XMP (L-Gln route): step 1/1. Functionally, catalyzes the synthesis of GMP from XMP. This is GMP synthase [glutamine-hydrolyzing] subunit A from Methanococcus maripaludis (strain C5 / ATCC BAA-1333).